The primary structure comprises 178 residues: uncharacterized protein (178 aa).

This is an uncharacterized protein from Escherichia coli (strain K12).